An 826-amino-acid chain; its full sequence is Villin-1 (826 aa).

The interval 1–734 (MVELSKKVTG…YDELKAELGD (734 aa)) is core. A Gelsolin-like 1 repeat occupies 27 to 76 (MEMVPVPTKSYGNFYEGDCYVLLSTRKTGSGFSYNIHYWLGKNSSQDEQG). 112 to 119 (KQGLIYKQ) lines the a 1,2-diacyl-sn-glycero-3-phospho-(1D-myo-inositol-4,5-bisphosphate) pocket. Residues 129-137 (VETNTYNVQ) form a crucial for binding an actin filament region. 138-146 (RLLHVKGKK) is an a 1,2-diacyl-sn-glycero-3-phospho-(1D-myo-inositol-4,5-bisphosphate) binding site. 5 Gelsolin-like repeats span residues 148–188 (VVAA…AERL), 265–309 (LVIQ…EEKQ), 408–457 (QELV…DELA), 528–568 (TKAF…DERE), and 631–672 (FLAT…SEKE). A headpiece region spans residues 735–826 (NASIGQLVSG…QNLKKEKGLF (92 aa)). The region spanning 760–826 (PTKLETFPLD…QNLKKEKGLF (67 aa)) is the HP domain. The tract at residues 820-823 (KKEK) is absolutely required for activity.

The protein belongs to the villin/gelsolin family. In terms of assembly, monomer. Homodimer. Associates with F-actin; the association with F-actin is inhibited by tropomyosin. Post-translationally, phosphorylated on tyrosine residues. The unphosphorylated form increases the initial rate of actin-nucleating activity, whereas the tyrosine-phosphorylated form inhibits actin-nucleating activity, enhances actin-bundling activity and enhances actin-severing activity by reducing high Ca(2+) requirements. The tyrosine-phosphorylated form does not regulate actin-capping activity. Tyrosine phosphorylation is essential for cell migration: tyrosine phosphorylation sites in the N-terminus half regulate actin reorganization and cell morphology, whereas tyrosine phosphorylation sites in the C-terminus half regulate cell migration. Tyrosine phosphorylation is induced by epidermal growth factor (EGF) and stimulates cell migration. As to expression, specifically expressed in epithelial cells. Component of brush border microvilli.

Its subcellular location is the cytoplasm. The protein localises to the cytoskeleton. It localises to the cell projection. It is found in the microvillus. The protein resides in the lamellipodium. Its subcellular location is the ruffle. The protein localises to the filopodium tip. It localises to the filopodium. In terms of biological role, epithelial cell-specific Ca(2+)-regulated actin-modifying protein that modulates the reorganization of microvillar actin filaments. Plays a role in the actin nucleation, actin filament bundle assembly, actin filament capping and severing. Binds phosphatidylinositol 4,5-bisphosphate (PIP2) and lysophosphatidic acid (LPA); binds LPA with higher affinity than PIP2. Binding to LPA increases its phosphorylation by SRC and inhibits all actin-modifying activities. Binding to PIP2 inhibits actin-capping and -severing activities but enhances actin-bundling activity. Regulates the intestinal epithelial cell morphology, cell invasion, cell migration and apoptosis. Protects against apoptosis induced by dextran sodium sulfate (DSS) in the gastrointestinal epithelium. Appears to regulate cell death by maintaining mitochondrial integrity. Enhances hepatocyte growth factor (HGF)-induced epithelial cell motility, chemotaxis and wound repair. Its actin-bundling activity is inhibited by tropomyosin. This is Villin-1 (VIL1) from Gallus gallus (Chicken).